A 123-amino-acid polypeptide reads, in one-letter code: Small ribosomal subunit protein uS12cz/uS12cy (123 aa).

Belongs to the universal ribosomal protein uS12 family. Part of the 30S ribosomal subunit.

Its subcellular location is the plastid. The protein localises to the chloroplast. With S4 and S5 plays an important role in translational accuracy. Located at the interface of the 30S and 50S subunits. This is Small ribosomal subunit protein uS12cz/uS12cy (rps12-A) from Drimys granadensis.